The sequence spans 237 residues: Proteasome subunit beta type-1 (237 aa).

This sequence belongs to the peptidase T1B family. In terms of assembly, the 26S proteasome consists of a 20S proteasome core and two 19S regulatory subunits. The 20S proteasome core is a barrel-shaped complex made of 28 subunits that are arranged in four stacked rings. The two outer rings are each formed by seven alpha subunits, and the two inner rings are formed by seven beta subunits. The proteolytic activity is exerted by three beta-subunits psmb5, psmb6 and psmb7.

The protein localises to the cytoplasm. It is found in the nucleus. Its function is as follows. Non-catalytic component of the 20S core proteasome complex involved in the proteolytic degradation of most intracellular proteins. This complex plays numerous essential roles within the cell by associating with different regulatory particles. Associated with two 19S regulatory particles, forms the 26S proteasome and thus participates in the ATP-dependent degradation of ubiquitinated proteins. The 26S proteasome plays a key role in the maintenance of protein homeostasis by removing misfolded or damaged proteins that could impair cellular functions, and by removing proteins whose functions are no longer required. Associated with the PA200 or PA28, the 20S proteasome mediates ubiquitin-independent protein degradation. The protein is Proteasome subunit beta type-1 of Danio rerio (Zebrafish).